Reading from the N-terminus, the 356-residue chain is Phosphotriesterase-related protein (356 aa).

Residues histidine 23, histidine 25, glutamate 175, histidine 207, histidine 236, and aspartate 304 each coordinate a divalent metal cation.

This sequence belongs to the metallo-dependent hydrolases superfamily. Phosphotriesterase family. It depends on a divalent metal cation as a cofactor.

This is Phosphotriesterase-related protein from Aedes aegypti (Yellowfever mosquito).